The following is a 350-amino-acid chain: tRNA uridine(34) hydroxylase (350 aa).

The region spanning 146–240 (DDPDALFIDM…YARKAREQGL (95 aa)) is the Rhodanese domain. Residue C200 is the Cysteine persulfide intermediate of the active site.

Belongs to the TrhO family.

The enzyme catalyses uridine(34) in tRNA + AH2 + O2 = 5-hydroxyuridine(34) in tRNA + A + H2O. Its function is as follows. Catalyzes oxygen-dependent 5-hydroxyuridine (ho5U) modification at position 34 in tRNAs, the first step in 5-carboxymethoxyuridine (cmo5U) biosynthesis. May be part of an alternate pathway, which is able to bypass cmo5U biogenesis in a subset of tRNAs under aerobic conditions. The polypeptide is tRNA uridine(34) hydroxylase (Escherichia coli (strain K12)).